The sequence spans 219 residues: Cytochrome b6 (219 aa).

The chain crosses the membrane as a helical span at residues 32–52; sequence IFYCFGGIVLTCFIIQAATGF. Residue cysteine 35 coordinates heme c. 2 residues coordinate heme b: histidine 86 and histidine 100. Helical transmembrane passes span 90–110, 116–136, and 190–210; these read SGLMVLVLLLHVSRVYLTAGF, LTWISGVILAICTVSFGVTGY, and AHTFILPLVTLALLLTHFLMI. Residues histidine 191 and histidine 206 each contribute to the heme b site.

Belongs to the cytochrome b family. PetB subfamily. The 4 large subunits of the cytochrome b6-f complex are cytochrome b6, subunit IV (17 kDa polypeptide, PetD), cytochrome f and the Rieske protein, while the 4 small subunits are PetG, PetL, PetM and PetN. The complex functions as a dimer. The cofactor is heme b. It depends on heme c as a cofactor.

The protein localises to the plastid. It localises to the chloroplast thylakoid membrane. Its function is as follows. Component of the cytochrome b6-f complex, which mediates electron transfer between photosystem II (PSII) and photosystem I (PSI), cyclic electron flow around PSI, and state transitions. This is Cytochrome b6 from Amphidinium operculatum (Dinoflagellate).